A 517-amino-acid polypeptide reads, in one-letter code: Crotonobetaine/carnitine--CoA ligase (517 aa).

Belongs to the ATP-dependent AMP-binding enzyme family.

The enzyme catalyses 4-(trimethylamino)butanoate + ATP + CoA = 4-(trimethylamino)butanoyl-CoA + AMP + diphosphate. It catalyses the reaction crotonobetaine + ATP + CoA = crotonobetainyl-CoA + AMP + diphosphate. It carries out the reaction (R)-carnitine + ATP + CoA = (R)-carnitinyl-CoA + AMP + diphosphate. It participates in amine and polyamine metabolism; carnitine metabolism. Its function is as follows. Catalyzes the transfer of CoA to carnitine, generating the initial carnitinyl-CoA needed for the CaiB reaction cycle. Also has activity toward crotonobetaine and gamma-butyrobetaine. The sequence is that of Crotonobetaine/carnitine--CoA ligase from Salmonella typhi.